The following is a 306-amino-acid chain: Aspartate carbamoyltransferase catalytic subunit (306 aa).

The carbamoyl phosphate site is built by Arg-51 and Thr-52. L-aspartate is bound at residue Lys-79. Carbamoyl phosphate is bound by residues Arg-101, His-130, and Gln-133. Arg-163 and Arg-215 together coordinate L-aspartate. The carbamoyl phosphate site is built by Gly-256 and Pro-257.

The protein belongs to the aspartate/ornithine carbamoyltransferase superfamily. ATCase family. As to quaternary structure, heterododecamer (2C3:3R2) of six catalytic PyrB chains organized as two trimers (C3), and six regulatory PyrI chains organized as three dimers (R2).

It carries out the reaction carbamoyl phosphate + L-aspartate = N-carbamoyl-L-aspartate + phosphate + H(+). It functions in the pathway pyrimidine metabolism; UMP biosynthesis via de novo pathway; (S)-dihydroorotate from bicarbonate: step 2/3. Its function is as follows. Catalyzes the condensation of carbamoyl phosphate and aspartate to form carbamoyl aspartate and inorganic phosphate, the committed step in the de novo pyrimidine nucleotide biosynthesis pathway. The sequence is that of Aspartate carbamoyltransferase catalytic subunit from Ehrlichia ruminantium (strain Welgevonden).